The primary structure comprises 602 residues: Sodium- and chloride-dependent GABA transporter 2 (602 aa).

Topologically, residues 1-40 are cytoplasmic; that stretch reads MDNRVSGTTSNGETKPVCPVMEKVEEDGTLEREQWTNKME. Helical transmembrane passes span 41-61, 68-88, and 121-141; these read FVLSVAGEIIGLGNVWRFPYL, GAFFIPYLIFLFTCGIPVFFL, and IVSLLNVYYIVVLAWALFYLF. Topologically, residues 142 to 206 are extracellular; the sequence is SSFTTDLPWG…GIQHLGSLRW (65 aa). C153 and C162 are oxidised to a cystine. N169, N173, and N178 each carry an N-linked (GlcNAc...) asparagine glycan. Helical transmembrane passes span 207-227 and 233-253; these read ELVLCLLLAWIICYFCIWKGV and VVYFTATFPYLMLVVLLIRGV. N269 carries N-linked (GlcNAc...) asparagine glycosylation. The next 7 helical transmembrane spans lie at 282–302, 319–339, 366–386, 418–438, 453–473, 490–510, and 528–548; these read AGTQIFFSFAICLGCLTALGS, ILNSSTSFVAGFAIFSILGFM, VVMLPFSPLWACCFFFMVVLL, ILILIVSVVSFFIGLIMLTEG, GMCLLFVAIFESLCVAWVYGA, PLIKYCWLFFTPAVCLATFLF, and WWGDALGWLLALSSMVCIPAW. Over 549–602 the chain is Cytoplasmic; that stretch reads SIYKLRTLKGPLRERLRQLVCPAEDLPQKSQPELTSPATPMTSLLRLTELESNC. Phosphothreonine is present on T587. Position 591 is a phosphoserine (S591).

The protein belongs to the sodium:neurotransmitter symporter (SNF) (TC 2.A.22) family. SLC6A13 subfamily. Brain, retina, and peripheral tissues. Expressed in hepatocytes (at protein level).

It is found in the cell membrane. The protein localises to the basolateral cell membrane. It catalyses the reaction 4-aminobutanoate(out) + chloride(out) + 2 Na(+)(out) = 4-aminobutanoate(in) + chloride(in) + 2 Na(+)(in). It carries out the reaction taurine(out) + chloride(out) + 2 Na(+)(out) = taurine(in) + chloride(in) + 2 Na(+)(in). The catalysed reaction is beta-alanine(out) + chloride(out) + 2 Na(+)(out) = beta-alanine(in) + chloride(in) + 2 Na(+)(in). The enzyme catalyses hypotaurine(out) + chloride(out) + 2 Na(+)(out) = hypotaurine(in) + chloride(in) + 2 Na(+)(in). Its activity is regulated as follows. GABA transport is inhibited by beta-alanine, L-2,4-Diaminobutyric acid, hypotaurine and nipecotic acid. Taurine transport is inhibited by hypotaurine, beta-alanine and nipecotic acid. Mediates sodium- and chloride-dependent transport of gamma-aminobutyric acid (GABA). Mediates transport of taurine and is the major taurine transporter in hepatocytes. Can also mediate transport of beta-alanine and hypotaurine. This is Sodium- and chloride-dependent GABA transporter 2 (Slc6a13) from Rattus norvegicus (Rat).